Consider the following 171-residue polypeptide: Cytochrome c oxidase subunit 5b-2, mitochondrial (171 aa).

A mitochondrion-targeting transit peptide spans 1-54; it reads MWRRIVSSHLKSISAVGSCAAPSCRHAVVESTHLSLSTRASSIPAYSSIFSRLI. Residues cysteine 121, cysteine 145, and cysteine 148 each contribute to the Zn(2+) site.

This sequence belongs to the cytochrome c oxidase subunit 5B (TC 3.D.4.11) family.

It is found in the mitochondrion inner membrane. In terms of biological role, this protein is one of the nuclear-coded polypeptide chains of cytochrome c oxidase, the terminal oxidase in mitochondrial electron transport. The polypeptide is Cytochrome c oxidase subunit 5b-2, mitochondrial (COX5B-2) (Arabidopsis thaliana (Mouse-ear cress)).